We begin with the raw amino-acid sequence, 345 residues long: Protein lifeguard 1 (345 aa).

Residues 1–115 are disordered; that stretch reads MSHEKSFLVS…GNYQEEGPPS (115 aa). Pro residues-rich tracts occupy residues 24 to 46 and 79 to 98; these read APMP…PFQP and GPYP…PPFQ. 7 consecutive transmembrane segments (helical) span residues 139-159, 171-191, 202-222, 227-247, 257-277, 281-301, and 320-340; these read VFLV…IFTF, VWTY…LSCC, LVAL…IASF, AVIM…IFSM, MGVL…CIFI, ILEI…LAVD, and FAAL…LTII.

It belongs to the BI1 family. LFG subfamily.

The protein localises to the membrane. Its function is as follows. Potential apoptotic regulator. The polypeptide is Protein lifeguard 1 (Grina) (Mus musculus (Mouse)).